A 493-amino-acid chain; its full sequence is UDP-N-acetylmuramoyl-L-alanyl-D-glutamate--2,6-diaminopimelate ligase (493 aa).

UDP-N-acetyl-alpha-D-muramoyl-L-alanyl-D-glutamate contacts are provided by Leu30 and Ser32. 117-123 (GTNGKTT) lines the ATP pocket. UDP-N-acetyl-alpha-D-muramoyl-L-alanyl-D-glutamate is bound by residues Asn158, 159–160 (TT), Ser186, Gln192, and Arg194. Residue Lys226 is modified to N6-carboxylysine. Meso-2,6-diaminopimelate is bound by residues Arg388, 412-415 (DNPR), Gly463, and Glu467. The short motif at 412-415 (DNPR) is the Meso-diaminopimelate recognition motif element.

This sequence belongs to the MurCDEF family. MurE subfamily. The cofactor is Mg(2+). Carboxylation is probably crucial for Mg(2+) binding and, consequently, for the gamma-phosphate positioning of ATP.

It is found in the cytoplasm. It catalyses the reaction UDP-N-acetyl-alpha-D-muramoyl-L-alanyl-D-glutamate + meso-2,6-diaminopimelate + ATP = UDP-N-acetyl-alpha-D-muramoyl-L-alanyl-gamma-D-glutamyl-meso-2,6-diaminopimelate + ADP + phosphate + H(+). It functions in the pathway cell wall biogenesis; peptidoglycan biosynthesis. Its function is as follows. Catalyzes the addition of meso-diaminopimelic acid to the nucleotide precursor UDP-N-acetylmuramoyl-L-alanyl-D-glutamate (UMAG) in the biosynthesis of bacterial cell-wall peptidoglycan. The chain is UDP-N-acetylmuramoyl-L-alanyl-D-glutamate--2,6-diaminopimelate ligase from Vibrio vulnificus (strain YJ016).